Consider the following 218-residue polypeptide: Regulator of G-protein signaling 20 (218 aa).

Basic and acidic residues predominate over residues 1-10 (MGSERTEMRK). A disordered region spans residues 1 to 26 (MGSERTEMRKRQMAATQETPGTAQAQ). The segment covering 14-26 (AATQETPGTAQAQ) has biased composition (polar residues). The region spanning 92-208 (SFDKLMLTPA…MNSAIYKDLL (117 aa)) is the RGS domain.

Forms a complex with G(alpha)z/i2 subunits and mu-opioid receptors; the formation of this complex results in mu-opioid receptor desensitization. Interacts with OPRM1. Fatty acylated. Heavily palmitoylated in the cysteine string motif. Post-translationally, N- and O-glycosylated in synapsomal membranes. In terms of processing, sumoylated by SUMO1 and SUM02 in synaptosomes. The sumoylated forms act as a scaffold for sequestering mu-opioid receptor-activated G(alpha) subunits.

The protein localises to the membrane. It localises to the nucleus. The protein resides in the cytoplasm. Functionally, inhibits signal transduction by increasing the GTPase activity of G protein alpha subunits thereby driving them into their inactive GDP-bound form. Binds selectively to G(z)-alpha and G(alpha)-i2 subunits, accelerates their GTPase activity and regulates their signaling activities. The G(z)-alpha activity is inhibited by the phosphorylation and palmitoylation of the G-protein. Negatively regulates mu-opioid receptor-mediated activation of the G-proteins. The chain is Regulator of G-protein signaling 20 (RGS20) from Gallus gallus (Chicken).